The following is a 523-amino-acid chain: MKKILLMLLCVSVLGCSKNSVESEKPVDVLLIGGGIMSATLGTYLNELEPGWTIEMVERLDKVAEESSNGWNNAGTGHSAFCELNYTSEAADGSMDISKAVAINENFEISKQFWAYQVDRKVLNDPKSFINNVPHMSFVWGDDNVAFLKKRHAALQHSSLFRGMEYSEDPEQIKQWVPLVMEGREPGQKIAATRMSIGTDVNFGEITRQLVGSLSAKDTFKLRLQHEVRDLKRNDDNTWTVTMADLANGDKETSVKARFVFIGAGGGALKLLQMSGIPEAEGYAGFPVGGSFLATTNPDVVKRHLAKVYGKASVGSPPMSVPHLDTRMIDGKPVLLFGPFATFSTKFLKNGSLWDLPGSVTSGNIGPMFNAGIDNFDLSQYLIGQLMLSQDDRMASLREYFPEARDEDWKLVQAGQRVQIIKKDAEKGGVLQFGTEVVTAADGSVAALLGASPGASTAAPIMLSVLEKAFKDKVATPEWQARLKEIVPSYGRKLNNDIELTNSTRAWSSERLQLIHVPVQPEA.

It belongs to the MQO family. Requires FAD as cofactor.

The enzyme catalyses (S)-malate + a quinone = a quinol + oxaloacetate. It participates in carbohydrate metabolism; tricarboxylic acid cycle; oxaloacetate from (S)-malate (quinone route): step 1/1. This is Probable malate:quinone oxidoreductase 1 from Pseudomonas aeruginosa (strain ATCC 15692 / DSM 22644 / CIP 104116 / JCM 14847 / LMG 12228 / 1C / PRS 101 / PAO1).